The primary structure comprises 31 residues: Cuticle protein 54 (31 aa).

2 repeat units span residues 7–10 and 13–17.

Component of the cuticle of migratory locust which contains more than 100 different structural proteins. This is Cuticle protein 54 from Locusta migratoria (Migratory locust).